The following is a 45-amino-acid chain: Cytochrome b559 subunit beta (45 aa).

The helical transmembrane segment at 20 to 36 (WLALHTLGVPTVFFLGA) threads the bilayer. Histidine 24 is a heme binding site.

The protein belongs to the PsbE/PsbF family. As to quaternary structure, heterodimer of an alpha subunit and a beta subunit. PSII is composed of 1 copy each of membrane proteins PsbA, PsbB, PsbC, PsbD, PsbE, PsbF, PsbH, PsbI, PsbJ, PsbK, PsbL, PsbM, PsbT, PsbX, PsbY, PsbZ, Psb30/Ycf12, peripheral proteins PsbO, CyanoQ (PsbQ), PsbU, PsbV and a large number of cofactors. It forms dimeric complexes. It depends on heme b as a cofactor.

It is found in the cellular thylakoid membrane. This b-type cytochrome is tightly associated with the reaction center of photosystem II (PSII). PSII is a light-driven water:plastoquinone oxidoreductase that uses light energy to abstract electrons from H(2)O, generating O(2) and a proton gradient subsequently used for ATP formation. It consists of a core antenna complex that captures photons, and an electron transfer chain that converts photonic excitation into a charge separation. This chain is Cytochrome b559 subunit beta, found in Parasynechococcus marenigrum (strain WH8102).